The sequence spans 229 residues: MELLLLSNSTLPGKAWLEHALPLVAEQLHGRRSAVFLPFAGVTQTWDDYTAKTAAVLAPLGVSVTGIHSVADPVAAIADAEVVIVGGGNTFQLLKESRERGLLAPIVAAVKRGALYIGWSAGANLACPTIRTTNDMPIVDPQGFDALGLFPLQINPHFTNALPEGHKGETREQRIRELLVVAPELTVIGLPEGNWIQVSKGQATLGGPNTTYVFNAGEEAVPLEAGHRF.

Catalysis depends on charge relay system residues S120, D135, and H157.

Belongs to the peptidase S51 family.

Its subcellular location is the cytoplasm. It catalyses the reaction Dipeptidase E catalyzes the hydrolysis of dipeptides Asp-|-Xaa. It does not act on peptides with N-terminal Glu, Asn or Gln, nor does it cleave isoaspartyl peptides.. Its function is as follows. Hydrolyzes dipeptides containing N-terminal aspartate residues. May play a role in allowing the cell to use peptide aspartate to spare carbon otherwise required for the synthesis of the aspartate family of amino acids. The protein is Peptidase E of Citrobacter koseri (strain ATCC BAA-895 / CDC 4225-83 / SGSC4696).